Reading from the N-terminus, the 299-residue chain is Taste receptor type 2 member 4 (299 aa).

At 1–9 the chain is on the extracellular side; sequence MLRLFYFSA. Residues 10–30 traverse the membrane as a helical segment; it reads IIASVILNFVGIIMNLFITVV. At 31 to 46 the chain is on the cytoplasmic side; sequence NCKTWVKSHRISSSDR. Residues 47 to 67 traverse the membrane as a helical segment; the sequence is ILFSLGITRFLMLGLFLVNTI. At 68–81 the chain is on the extracellular side; sequence YFVSSNXERSVYLS. The chain crosses the membrane as a helical span at residues 82-102; sequence AFFVLCFMFLDSSSLWFVTLL. Topologically, residues 103 to 131 are cytoplasmic; the sequence is NILYCVKITNFQHSVFLLLKRNISPKIPR. A helical transmembrane segment spans residues 132-152; the sequence is LLLACVLISAFTTCLYITLSQ. At 153–172 the chain is on the extracellular side; the sequence is ASPFPELVTTRNNTSFNINE. N164 and N165 each carry an N-linked (GlcNAc...) asparagine glycan. The helical transmembrane segment at 173 to 193 threads the bilayer; sequence GILSLVVSLVLSSSLQFIINV. Topologically, residues 194 to 230 are cytoplasmic; sequence TSASLLIHSLRRHIQKMQKNATGFWNPQTEAHVGAMK. The chain crosses the membrane as a helical span at residues 231-251; it reads LMVYFLILYIPYSVATLVQYL. At 252-262 the chain is on the extracellular side; the sequence is PFYAGMDMGTK. The chain crosses the membrane as a helical span at residues 263–283; sequence SICLIFATLYSPGHSVLIIIT. Residues 284–299 lie on the Cytoplasmic side of the membrane; the sequence is HPKLKTTAKKILCFKK.

This sequence belongs to the G-protein coupled receptor T2R family.

Its subcellular location is the membrane. The protein resides in the cell projection. It is found in the cilium membrane. Its function is as follows. Gustducin-coupled receptor implicated in the perception of bitter compounds in the oral cavity and the gastrointestinal tract. Signals through PLCB2 and the calcium-regulated cation channel TRPM5. In airway epithelial cells, binding of denatonium increases the intracellular calcium ion concentration and stimulates ciliary beat frequency. The sequence is that of Taste receptor type 2 member 4 (TAS2R4) from Pan troglodytes (Chimpanzee).